The chain runs to 846 residues: Sucrose synthase 6 (846 aa).

Positions 276-755 (CVFTVVIFSI…GLQRIYECYT (480 aa)) are GT-B glycosyltransferase.

This sequence belongs to the glycosyltransferase 1 family. Plant sucrose synthase subfamily.

It catalyses the reaction an NDP-alpha-D-glucose + D-fructose = a ribonucleoside 5'-diphosphate + sucrose + H(+). Its function is as follows. Sucrose-cleaving enzyme that provides UDP-glucose and fructose for various metabolic pathways. This Oryza sativa subsp. japonica (Rice) protein is Sucrose synthase 6 (SUS6).